The primary structure comprises 551 residues: Alkaline nuclease (551 aa).

The protein belongs to the herpesviridae alkaline nuclease family. As to quaternary structure, interacts with major DNA-binding protein; this interaction increases the nuclease processivity of the alkaline exonuclease.

Its subcellular location is the host nucleus. It localises to the host cytoplasm. Plays a role in processing non linear or branched viral DNA intermediates in order to promote the production of mature packaged unit-length linear progeny viral DNA molecules. Exhibits endonuclease and exonuclease activities and accepts both double-stranded and single-stranded DNA as substrate. Exonuclease digestion of DNA is in the 5'-&gt; 3' direction and the products are 5'-monophosphate nucleosides. Additionally, forms a recombinase with the major DNA-binding protein, which displays strand exchange activity. In Homo sapiens (Human), this protein is Alkaline nuclease.